Here is a 102-residue protein sequence, read N- to C-terminus: Small ribosomal subunit protein uS10 (102 aa).

This sequence belongs to the universal ribosomal protein uS10 family. Part of the 30S ribosomal subunit.

Functionally, involved in the binding of tRNA to the ribosomes. In Methanothermobacter thermautotrophicus (strain ATCC 29096 / DSM 1053 / JCM 10044 / NBRC 100330 / Delta H) (Methanobacterium thermoautotrophicum), this protein is Small ribosomal subunit protein uS10.